We begin with the raw amino-acid sequence, 885 residues long: DNA mismatch repair protein MutS (885 aa).

An ATP-binding site is contributed by 626-633; the sequence is GPNMGGKS.

It belongs to the DNA mismatch repair MutS family.

This protein is involved in the repair of mismatches in DNA. It is possible that it carries out the mismatch recognition step. This protein has a weak ATPase activity. The sequence is that of DNA mismatch repair protein MutS from Burkholderia orbicola (strain MC0-3).